A 901-amino-acid chain; its full sequence is DNA mismatch repair protein MutS (901 aa).

Residues 1–12 (MKYSASTSTPKS) show a composition bias toward polar residues. Positions 1 to 25 (MKYSASTSTPKSAQPKEEELENSLP) are disordered. 679–686 (GPNASGKS) is a binding site for ATP.

Belongs to the DNA mismatch repair MutS family.

Functionally, this protein is involved in the repair of mismatches in DNA. It is possible that it carries out the mismatch recognition step. This protein has a weak ATPase activity. This is DNA mismatch repair protein MutS from Trichodesmium erythraeum (strain IMS101).